Reading from the N-terminus, the 231-residue chain is F-box protein SKIP8 (231 aa).

Residues 1 to 24 (MPSTPLANGGTPPMGGGERTTVTT) are disordered. The F-box domain maps to 34–80 (VSMMEQLVPEITTHALSYLDYPSLCRLSMTNSLMRKAANDDNAWKAL).

In terms of assembly, part of a SCF (ASK-cullin-F-box) protein ligase complex. Interacts with SKP1A/ASK1.

The protein operates within protein modification; protein ubiquitination. Its function is as follows. Component of SCF(ASK-cullin-F-box) E3 ubiquitin ligase complexes, which may mediate the ubiquitination and subsequent proteasomal degradation of target proteins. The sequence is that of F-box protein SKIP8 (SKIP8) from Arabidopsis thaliana (Mouse-ear cress).